A 101-amino-acid polypeptide reads, in one-letter code: Small ribosomal subunit protein uS10 (101 aa).

It belongs to the universal ribosomal protein uS10 family. As to quaternary structure, part of the 30S ribosomal subunit.

Functionally, involved in the binding of tRNA to the ribosomes. This chain is Small ribosomal subunit protein uS10, found in Flavobacterium psychrophilum (strain ATCC 49511 / DSM 21280 / CIP 103535 / JIP02/86).